The primary structure comprises 1221 residues: DNA-directed RNA polymerase subunit beta' (1221 aa).

Zn(2+) is bound by residues Cys-60, Cys-62, Cys-75, and Cys-78. Mg(2+) is bound by residues Asp-449, Asp-451, and Asp-453. Zn(2+)-binding residues include Cys-821, Cys-896, Cys-903, and Cys-906.

Belongs to the RNA polymerase beta' chain family. In terms of assembly, the RNAP catalytic core consists of 2 alpha, 1 beta, 1 beta' and 1 omega subunit. When a sigma factor is associated with the core the holoenzyme is formed, which can initiate transcription. Mg(2+) is required as a cofactor. It depends on Zn(2+) as a cofactor.

It carries out the reaction RNA(n) + a ribonucleoside 5'-triphosphate = RNA(n+1) + diphosphate. Its function is as follows. DNA-dependent RNA polymerase catalyzes the transcription of DNA into RNA using the four ribonucleoside triphosphates as substrates. The chain is DNA-directed RNA polymerase subunit beta' from Lactobacillus delbrueckii subsp. bulgaricus (strain ATCC 11842 / DSM 20081 / BCRC 10696 / JCM 1002 / NBRC 13953 / NCIMB 11778 / NCTC 12712 / WDCM 00102 / Lb 14).